Here is a 461-residue protein sequence, read N- to C-terminus: Glutamate--tRNA ligase (461 aa).

Residues 8–18 carry the 'HIGH' region motif; it reads PSPTGYLHIGG. Positions 240-244 match the 'KMSKS' region motif; it reads KMSKR. Lys243 lines the ATP pocket.

Belongs to the class-I aminoacyl-tRNA synthetase family. Glutamate--tRNA ligase type 1 subfamily. Monomer.

The protein resides in the cytoplasm. The catalysed reaction is tRNA(Glu) + L-glutamate + ATP = L-glutamyl-tRNA(Glu) + AMP + diphosphate. In terms of biological role, catalyzes the attachment of glutamate to tRNA(Glu) in a two-step reaction: glutamate is first activated by ATP to form Glu-AMP and then transferred to the acceptor end of tRNA(Glu). This is Glutamate--tRNA ligase from Chromobacterium violaceum (strain ATCC 12472 / DSM 30191 / JCM 1249 / CCUG 213 / NBRC 12614 / NCIMB 9131 / NCTC 9757 / MK).